The primary structure comprises 326 residues: Biotin synthase (326 aa).

Residues 47 to 274 form the Radical SAM core domain; sequence NEVQVSSLLS…ASRVRLSAGR (228 aa). Residues C62, C66, and C69 each coordinate [4Fe-4S] cluster. Positions 106, 137, 197, and 269 each coordinate [2Fe-2S] cluster.

Belongs to the radical SAM superfamily. Biotin synthase family. In terms of assembly, homodimer. Requires [4Fe-4S] cluster as cofactor. The cofactor is [2Fe-2S] cluster.

It carries out the reaction (4R,5S)-dethiobiotin + (sulfur carrier)-SH + 2 reduced [2Fe-2S]-[ferredoxin] + 2 S-adenosyl-L-methionine = (sulfur carrier)-H + biotin + 2 5'-deoxyadenosine + 2 L-methionine + 2 oxidized [2Fe-2S]-[ferredoxin]. It functions in the pathway cofactor biosynthesis; biotin biosynthesis; biotin from 7,8-diaminononanoate: step 2/2. In terms of biological role, catalyzes the conversion of dethiobiotin (DTB) to biotin by the insertion of a sulfur atom into dethiobiotin via a radical-based mechanism. In Methylococcus capsulatus (strain ATCC 33009 / NCIMB 11132 / Bath), this protein is Biotin synthase.